The primary structure comprises 284 residues: uncharacterized protein (284 aa).

Residues 1 to 27 (MSNLPTSTPVSPSNLAEENPKSNNPES) show a composition bias toward polar residues. 2 disordered regions span residues 1-29 (MSNLPTSTPVSPSNLAEENPKSNNPESSE) and 248-284 (TRDSKRQQKKGKTTTVARSTNKKNKSMMGTVKDLKKK).

This is an uncharacterized protein from Caenorhabditis elegans.